A 171-amino-acid polypeptide reads, in one-letter code: 3-hydroxydecanoyl-[acyl-carrier-protein] dehydratase (171 aa).

His70 is a catalytic residue.

The protein belongs to the thioester dehydratase family. FabA subfamily. Homodimer.

It is found in the cytoplasm. The catalysed reaction is a (3R)-hydroxyacyl-[ACP] = a (2E)-enoyl-[ACP] + H2O. The enzyme catalyses (3R)-hydroxydecanoyl-[ACP] = (2E)-decenoyl-[ACP] + H2O. It carries out the reaction (2E)-decenoyl-[ACP] = (3Z)-decenoyl-[ACP]. It functions in the pathway lipid metabolism; fatty acid biosynthesis. In terms of biological role, necessary for the introduction of cis unsaturation into fatty acids. Catalyzes the dehydration of (3R)-3-hydroxydecanoyl-ACP to E-(2)-decenoyl-ACP and then its isomerization to Z-(3)-decenoyl-ACP. Can catalyze the dehydratase reaction for beta-hydroxyacyl-ACPs with saturated chain lengths up to 16:0, being most active on intermediate chain length. This chain is 3-hydroxydecanoyl-[acyl-carrier-protein] dehydratase, found in Shewanella sp. (strain MR-4).